The sequence spans 235 residues: Zorya protein ZorB (235 aa).

Residues 25–44 form a helical membrane-spanning segment; it reads LMAGLMMVFMFISIAYMHYV. Residues 87–225 enclose the OmpA-like domain; the sequence is QTLEVRFKSP…RVTFKVVTNA (139 aa).

The protein belongs to the MotB family.

Its subcellular location is the cell inner membrane. Its function is as follows. Component of antiviral defense system Zorya type II, composed of ZorA, ZorB and ZorE. Expression of Zorya type II in E.coli (strain MG1655) confers resistance to phages SECphi7 and T7. While most T7 infected Zorya-containing cells undergo abortive infection, a minority produce viable phage progeny. These eventually accumulate to a high multiplicity of infection, leading to culture collapse by 170 minutes after initial infection. ZorA and ZorB probably assemble in the cell inner membrane and exert their effect there. In Escherichia coli (strain ATCC 8739 / DSM 1576 / NBRC 3972 / NCIMB 8545 / WDCM 00012 / Crooks), this protein is Zorya protein ZorB.